A 331-amino-acid chain; its full sequence is Bifunctional nuclease (331 aa).

In terms of domain architecture, BFN spans 126–261; the sequence is CVQNNPRVLR…RIAYNNGLKV (136 aa). The UVR domain occupies 291-326; it reads EAQEFDLVRNMLVAAVEERYKDAAQYRDQLFMFRAK.

The protein belongs to the bifunctional nuclease family.

The protein localises to the nucleus. Its function is as follows. Bifunctional nuclease with both RNase and DNase activities. Involved in basal defense response. Participates in abscisic acid-derived callose deposition following infection by a necrotrophic pathogen. This chain is Bifunctional nuclease (BBD), found in Oryza minuta.